Here is a 119-residue protein sequence, read N- to C-terminus: Immunoglobulin heavy variable 3-15 (119 aa).

An N-terminal signal peptide occupies residues 1 to 19 (MEFGLSWIFLAAILKGVQC). The tract at residues 20-44 (EVQLVESGGGLVKPGGSLRLSCAAS) is framework-1. The Ig-like domain occupies 20 to 119 (EVQLVESGGG…EDTAVYYCTT (100 aa)). Cys41 and Cys117 form a disulfide bridge. The interval 45–52 (GFTFSNAW) is complementarity-determining-1. A framework-2 region spans residues 53 to 69 (MSWVRQAPGKGLEWVGR). The complementarity-determining-2 stretch occupies residues 70-79 (IKSKTDGGTT). Positions 80–117 (DYAAPVKGRFTISRDDSKNTLYLQMNSLKTEDTAVYYC) are framework-3. Residues 118–119 (TT) are complementarity-determining-3.

As to quaternary structure, immunoglobulins are composed of two identical heavy chains and two identical light chains; disulfide-linked.

It is found in the secreted. Its subcellular location is the cell membrane. Functionally, v region of the variable domain of immunoglobulin heavy chains that participates in the antigen recognition. Immunoglobulins, also known as antibodies, are membrane-bound or secreted glycoproteins produced by B lymphocytes. In the recognition phase of humoral immunity, the membrane-bound immunoglobulins serve as receptors which, upon binding of a specific antigen, trigger the clonal expansion and differentiation of B lymphocytes into immunoglobulins-secreting plasma cells. Secreted immunoglobulins mediate the effector phase of humoral immunity, which results in the elimination of bound antigens. The antigen binding site is formed by the variable domain of one heavy chain, together with that of its associated light chain. Thus, each immunoglobulin has two antigen binding sites with remarkable affinity for a particular antigen. The variable domains are assembled by a process called V-(D)-J rearrangement and can then be subjected to somatic hypermutations which, after exposure to antigen and selection, allow affinity maturation for a particular antigen. This is Immunoglobulin heavy variable 3-15 from Homo sapiens (Human).